A 678-amino-acid chain; its full sequence is MSTEDNHDSQILTARHRSDASEQSFKSLFGGPSSEDGKETEPDTHDHNHSFSNAKAPAKFANQNVAPFLARHIPEQYAPLGAQSILPADLSSANSKYCYRHRPDQKCRRQADEPSMDKLQRELESLPQGDQQSISHVWSLFSAAPAKHRKLILQGIMAQCCFPQLSYISATVRDLIRIDFITALPPEIAFKILCYLDTTSLCKASQVSRGWRALADDDVVWHRMCEQHIHRKCKKCGWGLPLLDRKRLRESKREIELRATTWDKGVVGPRSPDASAESPPSGKRKLEDDEVAVVKRHCSSLGSDAGVDKDSDFFKTRYRPWKEVYKDRFKVGTNWKYGRCSIKTFKGHTNGVMCLQFEDNILATGSYDTTIKIWDTETGEELRTLRGHESGIRCLQFDDTKLISGSMDRTIKVWNWRTGECISTYTGHRGGVIGLHFDASILASGSVDKTVKIWNFEDKSTFSLRGHTDWVNAVRVDTSSRTVFSASDDCTVRLWDLDTKTCIRTFHGHVGQVQQVVPLPREFEFEEHDAECENDDLSTTSGDADPPSIQASMGLEPNAAYSQSSAFGTSFDNGRAAPPRYMVTSALDSTIRLWETTTGRCLRTFFGHLEGVWALGADTLRIVSGAEDRMIKIWDPRTGKCERTFTGHSGPVTCIGLGDSRFATGSEDCEVRMYSFQS.

Residues 1 to 52 are disordered; that stretch reads MSTEDNHDSQILTARHRSDASEQSFKSLFGGPSSEDGKETEPDTHDHNHSFS. Basic and acidic residues predominate over residues 35–49; sequence EDGKETEPDTHDHNH. One can recognise an F-box domain in the interval 178–224; it reads IDFITALPPEIAFKILCYLDTTSLCKASQVSRGWRALADDDVVWHRM. Residues 266 to 287 form a disordered region; that stretch reads VVGPRSPDASAESPPSGKRKLE. WD repeat units lie at residues 347–375, 387–415, 427–455, 466–496, 508–543, 553–595, 607–635, and 647–675; these read GHTN…KIWD, GHES…KVWN, GHRG…KIWN, GHTD…RLWD, GHVG…TSGD, MGLE…RLWE, GHLE…KIWD, and GHSG…RMYS.

The protein belongs to the WD repeat MET30/SCONB/SCON-2 family. Component of the SCF(sconB) E3 ubiquitin ligase complex.

The protein operates within protein modification; protein ubiquitination. Functionally, component of the SCF(sconB) E3 ubiquitin ligase complex involved in the regulation of sulfur metabolite repression, probably by mediating the inactivation or degradation of the metR transcription factor. The sequence is that of Probable E3 ubiquitin ligase complex SCF subunit sconB (sconB) from Emericella nidulans (strain FGSC A4 / ATCC 38163 / CBS 112.46 / NRRL 194 / M139) (Aspergillus nidulans).